A 509-amino-acid chain; its full sequence is Bifunctional purine biosynthesis protein PurH (509 aa).

The MGS-like domain occupies 1-144; that stretch reads MKRALISVSD…KNYAAVTVVV (144 aa).

It belongs to the PurH family.

It catalyses the reaction (6R)-10-formyltetrahydrofolate + 5-amino-1-(5-phospho-beta-D-ribosyl)imidazole-4-carboxamide = 5-formamido-1-(5-phospho-D-ribosyl)imidazole-4-carboxamide + (6S)-5,6,7,8-tetrahydrofolate. It carries out the reaction IMP + H2O = 5-formamido-1-(5-phospho-D-ribosyl)imidazole-4-carboxamide. It functions in the pathway purine metabolism; IMP biosynthesis via de novo pathway; 5-formamido-1-(5-phospho-D-ribosyl)imidazole-4-carboxamide from 5-amino-1-(5-phospho-D-ribosyl)imidazole-4-carboxamide (10-formyl THF route): step 1/1. Its pathway is purine metabolism; IMP biosynthesis via de novo pathway; IMP from 5-formamido-1-(5-phospho-D-ribosyl)imidazole-4-carboxamide: step 1/1. The protein is Bifunctional purine biosynthesis protein PurH of Listeria innocua serovar 6a (strain ATCC BAA-680 / CLIP 11262).